Consider the following 361-residue polypeptide: Peptide chain release factor 1 (361 aa).

Residue Gln237 is modified to N5-methylglutamine. Positions 287-297 are enriched in basic and acidic residues; sequence KQQKEQSDTRK. The tract at residues 287–313 is disordered; that stretch reads KQQKEQSDTRKSLVGSGDRSERIRTYN.

It belongs to the prokaryotic/mitochondrial release factor family. In terms of processing, methylated by PrmC. Methylation increases the termination efficiency of RF1.

It is found in the cytoplasm. Functionally, peptide chain release factor 1 directs the termination of translation in response to the peptide chain termination codons UAG and UAA. This Francisella tularensis subsp. tularensis (strain FSC 198) protein is Peptide chain release factor 1.